The chain runs to 168 residues: 3-isopropylmalate dehydratase small subunit (168 aa).

The protein belongs to the LeuD family. LeuD type 2 subfamily. In terms of assembly, heterodimer of LeuC and LeuD.

The enzyme catalyses (2R,3S)-3-isopropylmalate = (2S)-2-isopropylmalate. It functions in the pathway amino-acid biosynthesis; L-leucine biosynthesis; L-leucine from 3-methyl-2-oxobutanoate: step 2/4. Catalyzes the isomerization between 2-isopropylmalate and 3-isopropylmalate, via the formation of 2-isopropylmaleate. The protein is 3-isopropylmalate dehydratase small subunit of Thermodesulfovibrio yellowstonii (strain ATCC 51303 / DSM 11347 / YP87).